The primary structure comprises 1212 residues: Myosin-1 (1212 aa).

Residues 1–35 (MGITRRGKDKAAAGQAVAGGASGGRARPKKATFET) form a disordered region. The Myosin motor domain maps to 41–715 (VGVSDLTLLS…TLFALEHMRD (675 aa)). 134-141 (GESGAGKT) is a binding site for ATP. Residues 405–487 (SVGILDIYGF…PGVFSALKDA (83 aa)) are actin-binding. IQ domains are found at residues 719–739 (HNMA…RAES) and 740–765 (ATRI…HGHR). Residues 773–962 (RRRMSILGSR…AVHTQQGEPP (190 aa)) enclose the TH1 domain. 2 disordered regions span residues 947 to 1064 (DFYK…APPA) and 1115 to 1212 (PAAY…DDDW). Positions 954–966 (VHTQQGEPPNSVS) are enriched in polar residues. Composition is skewed to low complexity over residues 987-998 (RPGGPNGRPARG) and 1008-1052 (PGGA…ASVR). Residues 1053-1062 (APPPPPPAAP) show a composition bias toward pro residues. The SH3 domain maps to 1065–1124 (KAKIMAKVLYDFAGQKENEMSIKEGDLIEIVQKENNGWWLAKSGNQQAWVPAAYVEEQKQ). Residues 1125–1140 (APPPVAASRPPPPAPP) show a composition bias toward pro residues. A compositionally biased stretch (polar residues) spans 1171–1190 (MSLNGSDGSRSNTPTPSLGN).

The protein belongs to the TRAFAC class myosin-kinesin ATPase superfamily. Myosin family.

The protein localises to the cytoplasm. It localises to the cytoskeleton. It is found in the actin patch. Its function is as follows. Type-I myosin implicated in the organization of the actin cytoskeleton. Required for proper actin cytoskeleton polarization. At the cell cortex, assembles in patch-like structures together with proteins from the actin-polymerizing machinery and promotes actin assembly. Functions as actin nucleation-promoting factor (NPF) for the Arp2/3 complex. In Pyricularia oryzae (strain 70-15 / ATCC MYA-4617 / FGSC 8958) (Rice blast fungus), this protein is Myosin-1 (MYO1).